We begin with the raw amino-acid sequence, 655 residues long: Very long-chain specific acyl-CoA dehydrogenase, mitochondrial (655 aa).

Residues 1–40 (MRAARMAQSTGRQLLRLRGVSSWPGELLGQPRPGPARRPY) constitute a mitochondrion transit peptide. The tract at residues 22–66 (SWPGELLGQPRPGPARRPYASGVAQAAVDQSDSQPSEASTREKRA) is disordered. The segment at 41–482 (ASGVAQAAVD…ALQGCMDKGK (442 aa)) is catalytic. The span at 49–59 (VDQSDSQPSEA) shows a compositional bias: polar residues. At K71 the chain carries N6-acetyllysine; alternate. K71 is modified (N6-succinyllysine; alternate). At K195 the chain carries N6-succinyllysine. 214 to 223 (FCLTEPSSGS) provides a ligand contact to FAD. An S-nitrosocysteine modification is found at C237. An N6-acetyllysine; alternate modification is found at K239. The residue at position 239 (K239) is an N6-succinyllysine; alternate. 249-251 (WIS) serves as a coordination point for FAD. N6-acetyllysine; alternate is present on residues K276 and K278. K276 and K278 each carry N6-succinyllysine; alternate. The residue at position 298 (K298) is an N6-acetyllysine. Residue K331 is modified to N6-acetyllysine; alternate. At K331 the chain carries N6-succinyllysine; alternate. K372 bears the N6-succinyllysine mark. Residue 461–463 (FEG) coordinates substrate. The Proton acceptor role is filled by E462. An FAD-binding site is contributed by 464–466 (TND). K482 carries the N6-acetyllysine; alternate modification. Residue K482 is modified to N6-succinyllysine; alternate. Positions 483 to 516 (ELSGLGNALKNPFGNAGLLLGEAGKQLRRRAGLG) are membrane-anchoring. Phosphoserine occurs at positions 517 and 522. An N6-acetyllysine modification is found at K550. K556 carries the post-translational modification N6-acetyllysine; alternate. K556 is subject to N6-succinyllysine; alternate. Position 562 (Q562) interacts with FAD. K639 bears the N6-succinyllysine mark.

It belongs to the acyl-CoA dehydrogenase family. In terms of assembly, homodimer. Homodimerizes after import into the mitochondrion. Requires FAD as cofactor. Post-translationally, S-nitrosylation at Cys-237 in liver improves catalytic efficiency.

The protein resides in the mitochondrion inner membrane. The catalysed reaction is a very-long-chain 2,3-saturated fatty acyl-CoA + oxidized [electron-transfer flavoprotein] + H(+) = a very-long-chain (2E)-enoyl-CoA + reduced [electron-transfer flavoprotein]. It carries out the reaction dodecanoyl-CoA + oxidized [electron-transfer flavoprotein] + H(+) = (2E)-dodecenoyl-CoA + reduced [electron-transfer flavoprotein]. It catalyses the reaction tetradecanoyl-CoA + oxidized [electron-transfer flavoprotein] + H(+) = (2E)-tetradecenoyl-CoA + reduced [electron-transfer flavoprotein]. The enzyme catalyses oxidized [electron-transfer flavoprotein] + hexadecanoyl-CoA + H(+) = (2E)-hexadecenoyl-CoA + reduced [electron-transfer flavoprotein]. The catalysed reaction is octadecanoyl-CoA + oxidized [electron-transfer flavoprotein] + H(+) = (2E)-octadecenoyl-CoA + reduced [electron-transfer flavoprotein]. It carries out the reaction eicosanoyl-CoA + oxidized [electron-transfer flavoprotein] + H(+) = (2E)-eicosenoyl-CoA + reduced [electron-transfer flavoprotein]. It catalyses the reaction docosanoyl-CoA + oxidized [electron-transfer flavoprotein] + H(+) = (2E)-docosenoyl-CoA + reduced [electron-transfer flavoprotein]. The enzyme catalyses tetracosanoyl-CoA + oxidized [electron-transfer flavoprotein] + H(+) = (2E)-tetracosenoyl-CoA + reduced [electron-transfer flavoprotein]. Its pathway is lipid metabolism; mitochondrial fatty acid beta-oxidation. Its function is as follows. Very long-chain specific acyl-CoA dehydrogenase is one of the acyl-CoA dehydrogenases that catalyze the first step of mitochondrial fatty acid beta-oxidation, an aerobic process breaking down fatty acids into acetyl-CoA and allowing the production of energy from fats. The first step of fatty acid beta-oxidation consists in the removal of one hydrogen from C-2 and C-3 of the straight-chain fatty acyl-CoA thioester, resulting in the formation of trans-2-enoyl-CoA. Among the different mitochondrial acyl-CoA dehydrogenases, very long-chain specific acyl-CoA dehydrogenase acts specifically on acyl-CoAs with saturated 12 to 24 carbons long primary chains. This is Very long-chain specific acyl-CoA dehydrogenase, mitochondrial from Bos taurus (Bovine).